Here is a 359-residue protein sequence, read N- to C-terminus: NADH-quinone oxidoreductase subunit H (359 aa).

The next 8 helical transmembrane spans lie at 16-36 (IWPA…AVLA), 94-114 (GLFI…WAVI), 128-148 (GLLF…IAGW), 167-187 (VSYE…SGSL), 205-225 (GLTF…VYFI), 261-281 (FFLA…LLFL), 296-316 (IPGW…FLWV), and 331-351 (LGWK…GAWM).

It belongs to the complex I subunit 1 family. NDH-1 is composed of 14 different subunits. Subunits NuoA, H, J, K, L, M, N constitute the membrane sector of the complex.

It is found in the cell inner membrane. The enzyme catalyses a quinone + NADH + 5 H(+)(in) = a quinol + NAD(+) + 4 H(+)(out). NDH-1 shuttles electrons from NADH, via FMN and iron-sulfur (Fe-S) centers, to quinones in the respiratory chain. The immediate electron acceptor for the enzyme in this species is believed to be ubiquinone. Couples the redox reaction to proton translocation (for every two electrons transferred, four hydrogen ions are translocated across the cytoplasmic membrane), and thus conserves the redox energy in a proton gradient. This subunit may bind ubiquinone. The sequence is that of NADH-quinone oxidoreductase subunit H from Polaromonas naphthalenivorans (strain CJ2).